Reading from the N-terminus, the 152-residue chain is MAGRISCCLNLPPLDSNSAQSLASLLKTTSKISCRRTENETEPRKNKCSFVLGVAATVVIGGIQINDVASVEAAVVKSPVEEMAAGVVPPRRWSDKRTCPPWLENSLETIVPENLPRPSAHRRLELAGLAKGDAPPVGVVMTRVNRGGCFSV.

The N-terminal 22 residues, 1 to 22, are a transit peptide targeting the chloroplast; it reads MAGRISCCLNLPPLDSNSAQSL. A helical membrane pass occupies residues 48-65; sequence CSFVLGVAATVVIGGIQI. The interval 92 to 152 is important for chloroplast destabilization and the formation of CV-containing vesicles; the sequence is RWSDKRTCPP…RVNRGGCFSV (61 aa).

In terms of assembly, interacts with the photosystem II subunit PsbO1 via its C-terminal region in the chloroplast thylakoid membrane and in CV-containing vesicles (CCVs). As to expression, mostly expressed in senescent and mature leaves but not in young leaves.

It localises to the plastid. Its subcellular location is the chloroplast membrane. The protein resides in the chloroplast thylakoid membrane. The protein localises to the chloroplast envelope. It is found in the vacuole. It localises to the vesicle. Triggers stress-induced chloroplast degradation, independently of autophagy and senescence-associated vacuoles. After targeting to the chloroplast, triggers its destabilization and subsequent disassembly, inducing the formation of CV-containing vesicles (CCVs) carrying stromal proteins, envelope membrane proteins, and thylakoid membrane proteins which are released from the chloroplasts and mobilized to the vacuole for proteolysis. This chain is Protein CHLOROPLAST VESICULATION, found in Arabidopsis thaliana (Mouse-ear cress).